A 363-amino-acid chain; its full sequence is dTDP-L-rhamnose 4-epimerase (363 aa).

NAD(+) contacts are provided by residues 18 to 24, 68 to 69, and 90 to 94; these read GGAGFIG, DV, and LAAET. Substrate-binding residues include S136 and Y191. Y191 and K195 together coordinate NAD(+). Residue Y191 is the Proton acceptor of the active site. Residues N220 and R259 each coordinate substrate.

Belongs to the NAD(P)-dependent epimerase/dehydratase family. NAD(+) serves as cofactor.

It catalyses the reaction dTDP-6-deoxy-beta-L-talose = dTDP-beta-L-rhamnose. The protein operates within bacterial outer membrane biogenesis; LPS O-antigen biosynthesis. In terms of biological role, catalyzes the interconvertion of dTDP-6-deoxy-L-talose and dTDP-L-rhamnose. The equilibrium is strongly toward dTDP-L-rhamnose. The protein is dTDP-L-rhamnose 4-epimerase (wbiB) of Burkholderia thailandensis (strain ATCC 700388 / DSM 13276 / CCUG 48851 / CIP 106301 / E264).